Reading from the N-terminus, the 428-residue chain is MYKEPFQPTYEYALECDKHDELKDFQTEFYKKEGTIYLDGNSLGLLSKRAEKSLLTLLDSWKEYGIDGWTEGEHPWFFLSEKLGELTAPLIGALPEETIVTGSTTTNIHQVIATFYEPKGIRTKILADELTFPSDIYALQSQIRLKGLDPDEHLVRVKSRDGRTLSEDDIIQAMTDDIALILLPSVLYRSGQILDMKRLTAEAHERGIHIGFDLCHSIGSIPHHFKEWDVDFAIWCNYKYLNAGPGGVAGLYVNKKHFNRLPGLSGWFSSRKDKQFDMEHTLTAADHAGAYQIGTPHVLSTAPLIGSLEIFKEAGIERLREKSLHITRFMLNLIAHELSDFGFTIGNPLEDEKRGGHIYLEHAEAARICKALKANGVIPDFRAPNGVRLAPVALYNTYEEVWQSVMILKKIMKDEEYKQFENKREVVA.

Pyridoxal 5'-phosphate contacts are provided by residues Thr-104, Thr-105, 132–135, Asp-213, His-216, and Tyr-238; that span reads FPSD. An N6-(pyridoxal phosphate)lysine modification is found at Lys-239. Pyridoxal 5'-phosphate-binding residues include Trp-267 and Thr-295.

Belongs to the kynureninase family. As to quaternary structure, homodimer. It depends on pyridoxal 5'-phosphate as a cofactor.

It catalyses the reaction L-kynurenine + H2O = anthranilate + L-alanine + H(+). The enzyme catalyses 3-hydroxy-L-kynurenine + H2O = 3-hydroxyanthranilate + L-alanine + H(+). The protein operates within amino-acid degradation; L-kynurenine degradation; L-alanine and anthranilate from L-kynurenine: step 1/1. It functions in the pathway cofactor biosynthesis; NAD(+) biosynthesis; quinolinate from L-kynurenine: step 2/3. Functionally, catalyzes the cleavage of L-kynurenine (L-Kyn) and L-3-hydroxykynurenine (L-3OHKyn) into anthranilic acid (AA) and 3-hydroxyanthranilic acid (3-OHAA), respectively. This is Kynureninase from Bacillus anthracis.